A 142-amino-acid polypeptide reads, in one-letter code: Large ribosomal subunit protein uL11 (142 aa).

Belongs to the universal ribosomal protein uL11 family. In terms of assembly, part of the ribosomal stalk of the 50S ribosomal subunit. Interacts with L10 and the large rRNA to form the base of the stalk. L10 forms an elongated spine to which L12 dimers bind in a sequential fashion forming a multimeric L10(L12)X complex. In terms of processing, one or more lysine residues are methylated.

Forms part of the ribosomal stalk which helps the ribosome interact with GTP-bound translation factors. The protein is Large ribosomal subunit protein uL11 of Beijerinckia indica subsp. indica (strain ATCC 9039 / DSM 1715 / NCIMB 8712).